The chain runs to 367 residues: Chorismate synthase (367 aa).

Residues F41–R60 form a disordered region. Residues R48 and R54 each coordinate NADP(+). Residues R125–S127, N238–A239, G278, K293–S297, and R319 contribute to the FMN site.

It belongs to the chorismate synthase family. As to quaternary structure, homotetramer. It depends on FMNH2 as a cofactor.

The catalysed reaction is 5-O-(1-carboxyvinyl)-3-phosphoshikimate = chorismate + phosphate. It functions in the pathway metabolic intermediate biosynthesis; chorismate biosynthesis; chorismate from D-erythrose 4-phosphate and phosphoenolpyruvate: step 7/7. In terms of biological role, catalyzes the anti-1,4-elimination of the C-3 phosphate and the C-6 proR hydrogen from 5-enolpyruvylshikimate-3-phosphate (EPSP) to yield chorismate, which is the branch point compound that serves as the starting substrate for the three terminal pathways of aromatic amino acid biosynthesis. This reaction introduces a second double bond into the aromatic ring system. This chain is Chorismate synthase, found in Xanthomonas axonopodis pv. citri (strain 306).